The chain runs to 229 residues: Enolase-phosphatase E1 (229 aa).

Residues Asp7 and Glu9 each coordinate Mg(2+). Residues Ser122–Ser123 and Lys161 contribute to the substrate site. Asp186 lines the Mg(2+) pocket.

This sequence belongs to the HAD-like hydrolase superfamily. MasA/MtnC family. Monomer. Mg(2+) is required as a cofactor.

The protein localises to the cytoplasm. It localises to the nucleus. It catalyses the reaction 5-methylsulfanyl-2,3-dioxopentyl phosphate + H2O = 1,2-dihydroxy-5-(methylsulfanyl)pent-1-en-3-one + phosphate. Its pathway is amino-acid biosynthesis; L-methionine biosynthesis via salvage pathway; L-methionine from S-methyl-5-thio-alpha-D-ribose 1-phosphate: step 3/6. The protein operates within amino-acid biosynthesis; L-methionine biosynthesis via salvage pathway; L-methionine from S-methyl-5-thio-alpha-D-ribose 1-phosphate: step 4/6. Its function is as follows. Bifunctional enzyme that catalyzes the enolization of 2,3-diketo-5-methylthiopentyl-1-phosphate (DK-MTP-1-P) into the intermediate 2-hydroxy-3-keto-5-methylthiopentenyl-1-phosphate (HK-MTPenyl-1-P), which is then dephosphorylated to form the acireductone 1,2-dihydroxy-3-keto-5-methylthiopentene (DHK-MTPene). In Clavispora lusitaniae (strain ATCC 42720) (Yeast), this protein is Enolase-phosphatase E1.